Consider the following 155-residue polypeptide: Ribosome maturation factor RimP (155 aa).

It belongs to the RimP family.

It localises to the cytoplasm. In terms of biological role, required for maturation of 30S ribosomal subunits. This chain is Ribosome maturation factor RimP, found in Prochlorococcus marinus (strain SARG / CCMP1375 / SS120).